Reading from the N-terminus, the 621-residue chain is E3 SUMO-protein ligase PIAS2 (621 aa).

The SAP domain maps to 11–45; it reads VSSFRVSELQVLLGFAGRNKSGRKHDLLMRALHLL. An LXXLL motif motif is present at residues 19-23; it reads LQVLL. Residues Lys-46 and Lys-249 each participate in a glycyl lysine isopeptide (Lys-Gly) (interchain with G-Cter in SUMO2) cross-link. Residues 134-299 form the PINIT domain; it reads QPSPPIPPVH…SMSVYLVRQL (166 aa). The SP-RING-type zinc-finger motif lies at 331–412; that stretch reads PDSEIATTSL…FMEILNDCSD (82 aa). Zn(2+)-binding residues include Cys-362, His-364, Cys-385, and Cys-388. Residues Lys-430, Lys-435, Lys-443, and Lys-452 each participate in a glycyl lysine isopeptide (Lys-Gly) (interchain with G-Cter in SUMO2) cross-link. An SUMO1-binding region spans residues 467–473; the sequence is VDVIDLT. Residues Ser-476, Ser-477, and Ser-478 each carry the phosphoserine modification. The Nuclear localization signal motif lies at 484–492; that stretch reads PPAKRKCIF. Lys-489 is covalently cross-linked (Glycyl lysine isopeptide (Lys-Gly) (interchain with G-Cter in SUMO2)). Ser-499 bears the Phosphoserine mark. Glycyl lysine isopeptide (Lys-Gly) (interchain with G-Cter in SUMO2) cross-links involve residues Lys-502 and Gln-562. Over residues 579-610 the composition is skewed to low complexity; it reads SSTSVTTTSSHESSTHVSSSSSRSETGVITSS. The interval 579 to 621 is disordered; sequence SSTSVTTTSSHESSTHVSSSSSRSETGVITSSGSNIPDIISLD.

Belongs to the PIAS family. As to quaternary structure, binds SUMO1 and UBE2I. Interacts with AXIN1, JUN, MDM2, PARK7, TP53 and TP73 isoform alpha, but not TP73 isoform beta. Interacts with STAT4 following IL12 and IFN-alpha stimulation of T-cells. Interacts also with GTF2I, GTF2IRD1, IKFZ1, DAB2 and MSX2, as well as with several steroid receptors, including ESR1, ESR2, NR3C1, PGR, AR, and with NCOA2. Sumoylation of a target protein seems to enhance the interaction. Binds to sumoylated ELK1. Binds DNA, such as CDKN1A promoter, in a sequence-specific manner. Interacts with PLAG1. Interacts with KLF8; the interaction results in SUMO ligation and repression of KLF8 transcriptional activity and of its cell cycle progression into G(1) phase. PIAS2-beta interacts with IFIH1/MDA5. Isoform PIAS2-alpha interacts with PML (isoform PML-12). Interacts with PRDM1/Blimp-1. Post-translationally, sumoylated. In terms of tissue distribution, mainly expressed in testis. Isoform 3 is expressed predominantly in adult testis, weakly in pancreas, embryonic testis and sperm, and at very low levels in other organs.

It is found in the nucleus speckle. The protein localises to the nucleus. It localises to the PML body. The protein operates within protein modification; protein sumoylation. Its function is as follows. Functions as an E3-type small ubiquitin-like modifier (SUMO) ligase, stabilizing the interaction between UBE2I and the substrate, and as a SUMO-tethering factor. Plays a crucial role as a transcriptional coregulator in various cellular pathways, including the STAT pathway, the p53 pathway and the steroid hormone signaling pathway. The effects of this transcriptional coregulation, transactivation or silencing may vary depending upon the biological context and the PIAS2 isoform studied. However, it seems to be mostly involved in gene silencing. Binds to sumoylated ELK1 and enhances its transcriptional activity by preventing recruitment of HDAC2 by ELK1, thus reversing SUMO-mediated repression of ELK1 transactivation activity. Isoform PIAS2-beta, but not isoform PIAS2-alpha, promotes MDM2 sumoylation. Isoform PIAS2-alpha promotes PARK7 sumoylation. Isoform PIAS2-beta promotes NCOA2 sumoylation more efficiently than isoform PIAS2-alpha. Isoform PIAS2-alpha sumoylates PML at'Lys-65' and 'Lys-160'. In Homo sapiens (Human), this protein is E3 SUMO-protein ligase PIAS2 (PIAS2).